An 819-amino-acid polypeptide reads, in one-letter code: Disintegrin and metalloproteinase domain-containing protein 9 (819 aa).

Residues 1 to 28 (MGSGARFPSGTLRVRWLLLLGLVGPVLG) form the signal peptide. Over 29-697 (AARPGFQQTS…YNEMNTALRD (669 aa)) the chain is Extracellular. Asn125, Asn144, Asn154, and Asn231 each carry an N-linked (GlcNAc...) asparagine glycan. The Peptidase M12B domain maps to 212-406 (RYVELFIVVD…KGGNCLLNIP (195 aa)). 7 cysteine pairs are disulfide-bonded: Cys322–Cys401, Cys363–Cys385, Cys365–Cys370, Cys473–Cys493, Cys644–Cys656, Cys650–Cys662, and Cys664–Cys673. His347 contacts Zn(2+). Residue Glu348 is part of the active site. His351 and His357 together coordinate Zn(2+). N-linked (GlcNAc...) asparagine glycosylation is found at Asn381 and Asn487. The region spanning 414 to 501 (APSCGNKLVD…FCQPDVFIQN (88 aa)) is the Disintegrin domain. The EGF-like domain maps to 644–698 (CDVQKKCHGHGVCNSNKNCHCENGWAPPNCETKGYGGSVDSGPTYNEMNTALRDG). Residues 698-718 (GLLVFFFLIVPLIVCAIFIFI) form a helical membrane-spanning segment. Topologically, residues 719–819 (KRDQLWRSYF…PAPPLYSSLT (101 aa)) are cytoplasmic. Disordered regions lie at residues 734-763 (QTYESDGKNQANPSRQPGSVPRHVSPVTPP) and 780-819 (AKQPQQFPSRPPPPQPKVSSQGNLIPARPAPAPPLYSSLT). Polar residues predominate over residues 735 to 750 (TYESDGKNQANPSRQP). Ser758 is subject to Phosphoserine. Residue Thr761 is modified to Phosphothreonine.

As to quaternary structure, interacts with SH3GL2 and SNX9 through its cytoplasmic tail. Interacts with ITGA6. It depends on Zn(2+) as a cofactor. Proteolytically cleaved in the trans-Golgi network before it reaches the plasma membrane to generate a mature protein. The removal of the pro-domain occurs via cleavage at two different sites. Processed most likely by a pro-protein convertase such as furin, at the boundary between the pro-domain and the catalytic domain. An additional upstream cleavage pro-protein convertase site (Arg-56/Glu-57) has an important role in the activation of ADAM9. In terms of processing, phosphorylation is induced in vitro by phorbol-12-myristate-13-acetate (PMA). As to expression, widely expressed. Expressed in chondrocytes. Isoform 2 is highly expressed in liver and heart.

It is found in the cell membrane. The protein localises to the secreted. Synthesized as an inactive form which is proteolytically cleaved to generate an active enzyme. Processing at the upstream site is particularly important for activation of the proenzyme, whereas processing at the boundary between the pro-domain and the catalytic domain does not appear to be essential. Inhibited by hydroxamic acid-based inhibitors. In terms of biological role, metalloprotease that cleaves and releases a number of molecules with important roles in tumorigenesis and angiogenesis, such as TEK, KDR, EPHB4, CD40, VCAM1 and CDH5. May mediate cell-cell, cell-matrix interactions and regulate the motility of cells via interactions with integrins. Functionally, may act as alpha-secretase for amyloid precursor protein (APP). The polypeptide is Disintegrin and metalloproteinase domain-containing protein 9 (ADAM9) (Homo sapiens (Human)).